A 370-amino-acid chain; its full sequence is NADH-quinone oxidoreductase subunit D 2 (370 aa).

It belongs to the complex I 49 kDa subunit family. In terms of assembly, NDH-1 is composed of 14 different subunits. Subunits NuoB, C, D, E, F, and G constitute the peripheral sector of the complex.

The protein resides in the cell inner membrane. It carries out the reaction a quinone + NADH + 5 H(+)(in) = a quinol + NAD(+) + 4 H(+)(out). Functionally, NDH-1 shuttles electrons from NADH, via FMN and iron-sulfur (Fe-S) centers, to quinones in the respiratory chain. The immediate electron acceptor for the enzyme in this species is believed to be ubiquinone. Couples the redox reaction to proton translocation (for every two electrons transferred, four hydrogen ions are translocated across the cytoplasmic membrane), and thus conserves the redox energy in a proton gradient. The protein is NADH-quinone oxidoreductase subunit D 2 of Solibacter usitatus (strain Ellin6076).